The chain runs to 219 residues: Protein-L-isoaspartate O-methyltransferase 2 (219 aa).

Residue S67 is part of the active site.

This sequence belongs to the methyltransferase superfamily. L-isoaspartyl/D-aspartyl protein methyltransferase family.

It is found in the cytoplasm. The enzyme catalyses [protein]-L-isoaspartate + S-adenosyl-L-methionine = [protein]-L-isoaspartate alpha-methyl ester + S-adenosyl-L-homocysteine. In terms of biological role, catalyzes the methyl esterification of L-isoaspartyl residues in peptides and proteins that result from spontaneous decomposition of normal L-aspartyl and L-asparaginyl residues. It plays a role in the repair and/or degradation of damaged proteins. In Nitrosococcus oceani (strain ATCC 19707 / BCRC 17464 / JCM 30415 / NCIMB 11848 / C-107), this protein is Protein-L-isoaspartate O-methyltransferase 2.